Consider the following 214-residue polypeptide: Variable small protein 1 (214 aa).

The signal sequence occupies residues 1–18; it reads MRKRISAIIMTLFMVFMS. Residue C19 is the site of N-palmitoyl cysteine attachment. C19 is lipidated: S-diacylglycerol cysteine.

It belongs to the variable small protein (Vsp) family.

It is found in the cell outer membrane. Functionally, the Vlp and Vsp proteins are antigenically distinct proteins, only one vlp or vsp gene is transcriptionally active at any one time. Switching between these genes is a mechanism of host immune response evasion. The chain is Variable small protein 1 from Borrelia hermsii.